The chain runs to 575 residues: Isocitrate dehydrogenase kinase/phosphatase (575 aa).

Residues 315–321 (APGVKGM) and K336 each bind ATP. Residue D371 is part of the active site.

This sequence belongs to the AceK family.

It is found in the cytoplasm. The enzyme catalyses L-seryl-[isocitrate dehydrogenase] + ATP = O-phospho-L-seryl-[isocitrate dehydrogenase] + ADP + H(+). Bifunctional enzyme which can phosphorylate or dephosphorylate isocitrate dehydrogenase (IDH) on a specific serine residue. This is a regulatory mechanism which enables bacteria to bypass the Krebs cycle via the glyoxylate shunt in response to the source of carbon. When bacteria are grown on glucose, IDH is fully active and unphosphorylated, but when grown on acetate or ethanol, the activity of IDH declines drastically concomitant with its phosphorylation. This is Isocitrate dehydrogenase kinase/phosphatase from Yersinia pseudotuberculosis serotype O:1b (strain IP 31758).